A 420-amino-acid polypeptide reads, in one-letter code: Gamma-glutamyl phosphate reductase (420 aa).

This sequence belongs to the gamma-glutamyl phosphate reductase family.

It is found in the cytoplasm. The enzyme catalyses L-glutamate 5-semialdehyde + phosphate + NADP(+) = L-glutamyl 5-phosphate + NADPH + H(+). It participates in amino-acid biosynthesis; L-proline biosynthesis; L-glutamate 5-semialdehyde from L-glutamate: step 2/2. Catalyzes the NADPH-dependent reduction of L-glutamate 5-phosphate into L-glutamate 5-semialdehyde and phosphate. The product spontaneously undergoes cyclization to form 1-pyrroline-5-carboxylate. The protein is Gamma-glutamyl phosphate reductase of Neisseria meningitidis serogroup C / serotype 2a (strain ATCC 700532 / DSM 15464 / FAM18).